Here is a 459-residue protein sequence, read N- to C-terminus: MAP kinase-interacting serine/threonine-protein kinase 2 (459 aa).

The disordered stretch occupies residues Leu-28–Lys-67. The short motif at Lys-60–Lys-66 is the Nuclear localization signal element. Ser-74 bears the Phosphoserine mark. The Protein kinase domain occupies Gln-84–Val-368. ATP contacts are provided by residues Leu-90–Val-98 and Lys-113. Residue Glu-160–Met-162 participates in staurosporine binding. The active-site Proton acceptor is Asp-205. Glu-209 is a binding site for staurosporine. A phosphothreonine mark is found at Thr-244 and Thr-249. Residues Cys-299, Cys-311, and Cys-314 each coordinate Zn(2+). Position 379 is a phosphothreonine (Thr-379). Phosphoserine is present on residues Ser-431 and Ser-434. Residues Leu-438–Arg-442 carry the MAP kinase binding motif. Position 446 is a phosphoserine (Ser-446). Phosphothreonine is present on Thr-450.

The protein belongs to the protein kinase superfamily. CAMK Ser/Thr protein kinase family. Monomer. Interacts with the C-terminal regions of EIF4G1 and EIF4G2; this interaction is promoted when MAPK pathways are repressed but repressed upon ERK proteins activation. Also binds to dephosphorylated MAPK3/ERK1 and MAPK1/ER2K. Interaction with phosphorylated MAPK3/ERK1 and MAPK1/ER2K protects it from dephosphorylation and inactivation. Interacts with ESR2 and EIF4E in the nucleus. The cofactor is Mg(2+). It depends on Zn(2+) as a cofactor. In terms of processing, dual phosphorylation of Thr-244 and Thr-249 activates the kinase. Phosphorylation of Thr-379 activates the kinase. Phosphorylated upon arsenic trioxide As(2)O(3) treatment. Phosphorylated by MAPK1/ERK2, MAPK11 and MAPK14. Dephosphorylated by PP2A.

Its subcellular location is the cytoplasm. The protein resides in the nucleus. The protein localises to the PML body. The catalysed reaction is L-seryl-[protein] + ATP = O-phospho-L-seryl-[protein] + ADP + H(+). The enzyme catalyses L-threonyl-[protein] + ATP = O-phospho-L-threonyl-[protein] + ADP + H(+). Inhibited by CGP57380 and staurosporine. Serine/threonine-protein kinase that phosphorylates SFPQ/PSF, HNRNPA1 and EIF4E. May play a role in the response to environmental stress and cytokines. Appears to regulate translation by phosphorylating EIF4E, thus increasing the affinity of this protein for the 7-methylguanosine-containing mRNA cap. Required for mediating PP2A-inhibition-induced EIF4E phosphorylation. Triggers EIF4E shuttling from cytoplasm to nucleus. Enhances the formation of EIF4F complex in pachytene spermatocytes, thus promoting mRNA translation during spermatogenesis. Displays a high basal kinase activity. Acts as a mediator of the suppressive effects of IFNgamma on hematopoiesis. Negative regulator for signals that control generation of arsenic trioxide As(2)O(3)-dependent apoptosis and anti-leukemic responses. Involved in anti-apoptotic signaling in response to serum withdrawal. This is MAP kinase-interacting serine/threonine-protein kinase 2 (Mknk2) from Rattus norvegicus (Rat).